We begin with the raw amino-acid sequence, 111 residues long: MSAALTTLLLFVATAVAELVGCYLPYLWLRKGGSVWLLLPAALSLAVFVWLLTLHPAASGRVYAAYGGVYIATALLWLWWVDRVTPTRWDLLGAGCCLLGMAIIMFSPRSG.

The next 4 membrane-spanning stretches (helical) occupy residues 8–28 (LLLFVATAVAELVGCYLPYLW), 34–54 (SVWLLLPAALSLAVFVWLLTL), 62–82 (VYAAYGGVYIATALLWLWWVD), and 91–111 (LLGAGCCLLGMAIIMFSPRSG).

Belongs to the UPF0060 family.

The protein localises to the cell inner membrane. This is UPF0060 membrane protein xcc-b100_1273 from Xanthomonas campestris pv. campestris (strain B100).